The following is a 380-amino-acid chain: Cytochrome b (380 aa).

The next 4 membrane-spanning stretches (helical) occupy residues 34-54 (FGSL…LLAA), 78-99 (WLIR…YLHI), 114-134 (WNTG…GYVL), and 179-199 (FFTL…IHLT). Positions 84 and 98 each coordinate heme b. 2 residues coordinate heme b: His-183 and His-197. His-202 provides a ligand contact to a ubiquinone. 4 helical membrane passes run 227–247 (TKDI…ALFS), 289–309 (LGGV…PLLH), 321–341 (LSQL…WIGS), and 348–368 (FIII…ILFP).

This sequence belongs to the cytochrome b family. In terms of assembly, the cytochrome bc1 complex contains 11 subunits: 3 respiratory subunits (MT-CYB, CYC1 and UQCRFS1), 2 core proteins (UQCRC1 and UQCRC2) and 6 low-molecular weight proteins (UQCRH/QCR6, UQCRB/QCR7, UQCRQ/QCR8, UQCR10/QCR9, UQCR11/QCR10 and a cleavage product of UQCRFS1). This cytochrome bc1 complex then forms a dimer. Heme b is required as a cofactor.

The protein resides in the mitochondrion inner membrane. Component of the ubiquinol-cytochrome c reductase complex (complex III or cytochrome b-c1 complex) that is part of the mitochondrial respiratory chain. The b-c1 complex mediates electron transfer from ubiquinol to cytochrome c. Contributes to the generation of a proton gradient across the mitochondrial membrane that is then used for ATP synthesis. This chain is Cytochrome b (MT-CYB), found in Eudyptes chrysocome (Western rockhopper penguin).